Consider the following 170-residue polypeptide: Nicotinamide-nucleotide adenylyltransferase (170 aa).

Belongs to the archaeal NMN adenylyltransferase family.

It localises to the cytoplasm. The enzyme catalyses beta-nicotinamide D-ribonucleotide + ATP + H(+) = diphosphate + NAD(+). The protein operates within cofactor biosynthesis; NAD(+) biosynthesis; NAD(+) from nicotinamide D-ribonucleotide: step 1/1. This is Nicotinamide-nucleotide adenylyltransferase from Methanothrix thermoacetophila (strain DSM 6194 / JCM 14653 / NBRC 101360 / PT) (Methanosaeta thermophila).